We begin with the raw amino-acid sequence, 351 residues long: Protein-glutamate methylesterase/protein-glutamine glutaminase 1 (351 aa).

A Response regulatory domain is found at 1-115 (MVDDSAVVRQ…KQFLTESADE (115 aa)). At aspartate 49 the chain carries 4-aspartylphosphate. Residues 161–351 (AQTTERIVAI…MAREIVTQLQ (191 aa)) form the CheB-type methylesterase domain. Residues serine 173, histidine 199, and aspartate 295 contribute to the active site.

It belongs to the CheB family. Phosphorylated by CheA. Phosphorylation of the N-terminal regulatory domain activates the methylesterase activity.

The protein resides in the cytoplasm. The enzyme catalyses [protein]-L-glutamate 5-O-methyl ester + H2O = L-glutamyl-[protein] + methanol + H(+). It carries out the reaction L-glutaminyl-[protein] + H2O = L-glutamyl-[protein] + NH4(+). Functionally, involved in chemotaxis. Part of a chemotaxis signal transduction system that modulates chemotaxis in response to various stimuli. Catalyzes the demethylation of specific methylglutamate residues introduced into the chemoreceptors (methyl-accepting chemotaxis proteins or MCP) by CheR. Also mediates the irreversible deamidation of specific glutamine residues to glutamic acid. The protein is Protein-glutamate methylesterase/protein-glutamine glutaminase 1 of Xanthomonas oryzae pv. oryzae (strain MAFF 311018).